Consider the following 1768-residue polypeptide: Maestro heat-like repeat-containing protein family member 1 homolog (1768 aa).

HEAT repeat units follow at residues 4–47 (TSQV…HQPN), 164–203 (VHNPFGLVPFLTDILSRTVPLLQHVKTDPLRCAWARAICS), 816–856 (QRLQ…AVHP), 1166–1204 (QSQMQIYLSAIFEMLTDRQSHVSSAAAQLLTYAVMARGA), 1483–1521 (EQLLVKCIRRLEDSLTDPSLRIRKLCVKGLGELSECSST), and 1731–1768 (TISRELVFTGLVALLKDSEDVNVRISATRAIANLHDFH).

This sequence belongs to the MROH1 family. In terms of assembly, homooligomer; homooligomerizes at lysosome scission sites.

The protein resides in the lysosome membrane. In terms of biological role, lysosome fission factor. Recruited to lysosomes by rab-7 at scission sites and homooligomerizes to mediate the constriction and scission of lysosomal tubules. May sever membranes by inserting amphipathic helices into one bilayer leaflet. Lysosome fission is required to maintain their steady-state number, shape, size, composition and function, and to accomplish regeneration. This is Maestro heat-like repeat-containing protein family member 1 homolog from Caenorhabditis elegans.